The sequence spans 167 residues: SsrA-binding protein (167 aa).

The protein belongs to the SmpB family.

Its subcellular location is the cytoplasm. Its function is as follows. Required for rescue of stalled ribosomes mediated by trans-translation. Binds to transfer-messenger RNA (tmRNA), required for stable association of tmRNA with ribosomes. tmRNA and SmpB together mimic tRNA shape, replacing the anticodon stem-loop with SmpB. tmRNA is encoded by the ssrA gene; the 2 termini fold to resemble tRNA(Ala) and it encodes a 'tag peptide', a short internal open reading frame. During trans-translation Ala-aminoacylated tmRNA acts like a tRNA, entering the A-site of stalled ribosomes, displacing the stalled mRNA. The ribosome then switches to translate the ORF on the tmRNA; the nascent peptide is terminated with the 'tag peptide' encoded by the tmRNA and targeted for degradation. The ribosome is freed to recommence translation, which seems to be the essential function of trans-translation. The polypeptide is SsrA-binding protein (Stenotrophomonas maltophilia (strain K279a)).